We begin with the raw amino-acid sequence, 525 residues long: PE-PGRS family protein PE_PGRS47 (525 aa).

A PE domain is found at 1-93; sequence MSFVIAAPEF…AYSYASAEAA (93 aa). Residues 506–525 form a disordered region; that stretch reads VGGAGGLLEGQNGENGLLPS. The segment covering 514–525 has biased composition (low complexity); that stretch reads EGQNGENGLLPS.

It belongs to the mycobacterial PE family. PGRS subfamily.

It is found in the secreted. Its subcellular location is the cell surface. It localises to the host cytoplasm. The protein resides in the host cytosol. In terms of biological role, contributes to evasion of both innate and adaptive immunity. Inhibits autophagy in infected host phagocytes and inhibits major histocompatibility complex (MHC) class II antigen presentation by mycobacteria-infected dendritic cells. Has an important role in the growth and survival of M.tuberculosis, particularly during intracellular growth and in the later chronic phase of infection. This chain is PE-PGRS family protein PE_PGRS47, found in Mycobacterium tuberculosis (strain ATCC 25618 / H37Rv).